The chain runs to 422 residues: Charged multivesicular body protein 7 (422 aa).

Residues 234–304 are a coiled coil; the sequence is KLLSERLQSA…ERISAAETDR (71 aa). Residues 394-422 are disordered; it reads RPTEWKMDQAAHSPADGSFLRSVPEPMLQ.

It belongs to the SNF7 family.

The protein localises to the cytoplasm. It localises to the nucleus envelope. Functionally, ESCRT-III-like protein required to recruit the ESCRT-III complex to the nuclear envelope during late anaphase. Together with SPAST, the ESCRT-III complex promotes nuclear envelope sealing and mitotic spindle disassembly during late anaphase. Plays a role in the endosomal sorting pathway. This Xenopus laevis (African clawed frog) protein is Charged multivesicular body protein 7 (chmp7).